The primary structure comprises 354 residues: Serum paraoxonase/arylesterase 2 (354 aa).

Cys-42 and Cys-352 are joined by a disulfide. Glu-53 and Asp-54 together coordinate Ca(2+). His-114 serves as the catalytic Proton acceptor. Ca(2+)-binding residues include Ile-116, Asn-167, Asp-168, and Asn-223. A glycan (N-linked (GlcNAc...) asparagine) is linked at Asn-254. Ca(2+)-binding residues include Asp-268 and Asn-269. N-linked (GlcNAc...) asparagine glycosylation is found at Asn-269 and Asn-323.

It belongs to the paraoxonase family. As to quaternary structure, homotrimer. It depends on Ca(2+) as a cofactor. The signal sequence is not cleaved. Widely expressed with highest expression in liver, lung, placenta, testis and heart.

The protein localises to the membrane. It catalyses the reaction a phenyl acetate + H2O = a phenol + acetate + H(+). It carries out the reaction an N-acyl-L-homoserine lactone + H2O = an N-acyl-L-homoserine + H(+). Capable of hydrolyzing lactones and a number of aromatic carboxylic acid esters. Has antioxidant activity. Is not associated with high density lipoprotein. Prevents LDL lipid peroxidation, reverses the oxidation of mildly oxidized LDL, and inhibits the ability of MM-LDL to induce monocyte chemotaxis. This Homo sapiens (Human) protein is Serum paraoxonase/arylesterase 2 (PON2).